The following is a 432-amino-acid chain: Enolase (432 aa).

Glutamine 164 contacts (2R)-2-phosphoglycerate. Glutamate 206 acts as the Proton donor in catalysis. Mg(2+) contacts are provided by aspartate 243, glutamate 289, and aspartate 316. (2R)-2-phosphoglycerate is bound by residues lysine 341, arginine 370, serine 371, and lysine 392. Lysine 341 (proton acceptor) is an active-site residue.

Belongs to the enolase family. Mg(2+) is required as a cofactor.

It localises to the cytoplasm. The protein localises to the secreted. Its subcellular location is the cell surface. The enzyme catalyses (2R)-2-phosphoglycerate = phosphoenolpyruvate + H2O. It functions in the pathway carbohydrate degradation; glycolysis; pyruvate from D-glyceraldehyde 3-phosphate: step 4/5. In terms of biological role, catalyzes the reversible conversion of 2-phosphoglycerate (2-PG) into phosphoenolpyruvate (PEP). It is essential for the degradation of carbohydrates via glycolysis. The chain is Enolase from Borrelia duttonii (strain Ly).